The sequence spans 265 residues: Catechol O-methyltransferase (265 aa).

Topologically, residues 1 to 2 (ML) are cytoplasmic. The chain crosses the membrane as a helical; Signal-anchor for type II membrane protein span at residues 3-19 (LAAVSLGLLLLAFLLLL). Residues 20 to 265 (RHLGWGLVAI…QGPGSSPVKS (246 aa)) lie on the Extracellular side of the membrane. S-adenosyl-L-methionine contacts are provided by residues Val85, Glu107, Ser115, Glu133, Ile134, 160–163 (GASQ), Ser162, and Asp184. Position 184 (Asp184) interacts with Mg(2+). Substrate is bound at residue Lys187. Mg(2+)-binding residues include Asp212 and Asn213. Substrate contacts are provided by Asn213 and Glu242. 3 positions are modified to phosphoserine: Ser260, Ser261, and Ser265.

The protein belongs to the class I-like SAM-binding methyltransferase superfamily. Cation-dependent O-methyltransferase family. The cofactor is Mg(2+).

It localises to the cytoplasm. Its subcellular location is the cell membrane. It carries out the reaction a catechol + S-adenosyl-L-methionine = a guaiacol + S-adenosyl-L-homocysteine + H(+). The catalysed reaction is 2-hydroxyestrone + S-adenosyl-L-methionine = 2-hydroxy-3-methoxy-estrone + S-adenosyl-L-homocysteine + H(+). It catalyses the reaction 4-hydroxyestrone + S-adenosyl-L-methionine = 4-methoxyestrone + S-adenosyl-L-homocysteine + H(+). The enzyme catalyses 2-hydroxyestrone + S-adenosyl-L-methionine = 2-methoxyestrone + S-adenosyl-L-homocysteine + H(+). It carries out the reaction 4-hydroxy-17beta-estradiol + S-adenosyl-L-methionine = 4-methoxy-17beta-estradiol + S-adenosyl-L-homocysteine + H(+). The catalysed reaction is 2-hydroxy-17beta-estradiol + S-adenosyl-L-methionine = 2-hydroxy-3-methoxy-17beta-estradiol + S-adenosyl-L-homocysteine + H(+). It catalyses the reaction 2-hydroxy-17beta-estradiol + S-adenosyl-L-methionine = 2-methoxy-17beta-estradiol + S-adenosyl-L-homocysteine + H(+). In terms of biological role, catalyzes the O-methylation, and thereby the inactivation, of catecholamine neurotransmitters and catechol hormones. Also shortens the biological half-lives of certain neuroactive drugs, like L-DOPA, alpha-methyl DOPA and isoproterenol. The polypeptide is Catechol O-methyltransferase (Mus musculus (Mouse)).